The chain runs to 72 residues: Translation initiation factor IF-1 (72 aa).

An S1-like domain is found at 1–72 (MSKEDVIELE…TRGRIVWRSK (72 aa)).

It belongs to the IF-1 family. Component of the 30S ribosomal translation pre-initiation complex which assembles on the 30S ribosome in the order IF-2 and IF-3, IF-1 and N-formylmethionyl-tRNA(fMet); mRNA recruitment can occur at any time during PIC assembly.

The protein localises to the cytoplasm. Its function is as follows. One of the essential components for the initiation of protein synthesis. Stabilizes the binding of IF-2 and IF-3 on the 30S subunit to which N-formylmethionyl-tRNA(fMet) subsequently binds. Helps modulate mRNA selection, yielding the 30S pre-initiation complex (PIC). Upon addition of the 50S ribosomal subunit IF-1, IF-2 and IF-3 are released leaving the mature 70S translation initiation complex. This is Translation initiation factor IF-1 from Caldicellulosiruptor saccharolyticus (strain ATCC 43494 / DSM 8903 / Tp8T 6331).